A 413-amino-acid chain; its full sequence is 1-deoxy-D-xylulose 5-phosphate reductoisomerase (413 aa).

7 residues coordinate NADPH: Thr13, Gly14, Ser15, Ile16, Arg40, Asn41, and Asn127. Lys128 contacts 1-deoxy-D-xylulose 5-phosphate. Glu129 provides a ligand contact to NADPH. Asp153 lines the Mn(2+) pocket. Positions 154, 155, 184, and 207 each coordinate 1-deoxy-D-xylulose 5-phosphate. Residue Glu155 coordinates Mn(2+). Position 213 (Gly213) interacts with NADPH. 1-deoxy-D-xylulose 5-phosphate contacts are provided by Ser220, Asn225, Lys226, and Glu229. Mn(2+) is bound at residue Glu229.

This sequence belongs to the DXR family. Requires Mg(2+) as cofactor. Mn(2+) is required as a cofactor.

The enzyme catalyses 2-C-methyl-D-erythritol 4-phosphate + NADP(+) = 1-deoxy-D-xylulose 5-phosphate + NADPH + H(+). It participates in isoprenoid biosynthesis; isopentenyl diphosphate biosynthesis via DXP pathway; isopentenyl diphosphate from 1-deoxy-D-xylulose 5-phosphate: step 1/6. Catalyzes the NADPH-dependent rearrangement and reduction of 1-deoxy-D-xylulose-5-phosphate (DXP) to 2-C-methyl-D-erythritol 4-phosphate (MEP). This is 1-deoxy-D-xylulose 5-phosphate reductoisomerase from Nitrosomonas europaea (strain ATCC 19718 / CIP 103999 / KCTC 2705 / NBRC 14298).